A 908-amino-acid chain; its full sequence is Protein translocase subunit SecA (908 aa).

ATP-binding positions include Q87, G105–T109, and D512. Residues G865 to S908 are disordered. Over residues M879–R888 the composition is skewed to basic and acidic residues. Zn(2+) contacts are provided by C892, C894, C903, and H904. The span at R898–S908 shows a compositional bias: basic residues.

Belongs to the SecA family. As to quaternary structure, monomer and homodimer. Part of the essential Sec protein translocation apparatus which comprises SecA, SecYEG and auxiliary proteins SecDF-YajC and YidC. It depends on Zn(2+) as a cofactor.

It localises to the cell inner membrane. The protein resides in the cytoplasm. It catalyses the reaction ATP + H2O + cellular proteinSide 1 = ADP + phosphate + cellular proteinSide 2.. Functionally, part of the Sec protein translocase complex. Interacts with the SecYEG preprotein conducting channel. Has a central role in coupling the hydrolysis of ATP to the transfer of proteins into and across the cell membrane, serving both as a receptor for the preprotein-SecB complex and as an ATP-driven molecular motor driving the stepwise translocation of polypeptide chains across the membrane. The polypeptide is Protein translocase subunit SecA (Shewanella sp. (strain MR-4)).